The sequence spans 116 residues: Evasin P1180 (116 aa).

The N-terminal stretch at 1–25 is a signal peptide; the sequence is MARNWSFRVIFVSAMWCALLKFATL. 4 cysteine pairs are disulfide-bonded: C38-C58, C54-C95, C71-C100, and C90-C109. N45, N73, and N104 each carry an N-linked (GlcNAc...) asparagine glycan.

It is found in the secreted. Salivary chemokine-binding protein which binds to host chemokines CCL2, CCL3, CCL4, CCL8 and CCL18. This chain is Evasin P1180, found in Amblyomma triste (Neotropical tick).